The chain runs to 763 residues: Transferrin receptor protein 1 (763 aa).

Residues 1-67 lie on the Cytoplasmic side of the membrane; it reads MMDQARSAFS…KPKRFNGRLC (67 aa). The segment at 1–67 is mediates interaction with SH3BP4; the sequence is MMDQARSAFS…KPKRFNGRLC (67 aa). Phosphoserine occurs at positions 10 and 19. Phosphotyrosine is present on tyrosine 20. The short motif at 20–23 is the Endocytosis signal element; it reads YTRF. The residue at position 21 (threonine 21) is a Phosphothreonine. At serine 24 the chain carries Phosphoserine. Residues 58–61 carry the Stop-transfer sequence motif; the sequence is KPKR. Residue cysteine 67 is the site of S-palmitoyl cysteine attachment. The helical; Signal-anchor for type II membrane protein transmembrane segment at 68 to 88 threads the bilayer; the sequence is FAAIALVIFFLIGFMSGYLGY. Residues 89–763 lie on the Extracellular side of the membrane; sequence CKRVEQKEEC…GDIWNIDNEF (675 aa). Threonine 104 is a glycosylation site (O-linked (GalNAc...) threonine). Residues 225–315 form the PA domain; the sequence is SKPTEVSGKL…GTGDPYTPGF (91 aa). N-linked (GlcNAc...) asparagine glycans are attached at residues asparagine 253 and asparagine 319. A ligand-binding region spans residues 572 to 763; the sequence is RLDTYEALTQ…GDIWNIDNEF (192 aa). A Cell attachment site motif is present at residues 649–651; sequence RGD. N-linked (GlcNAc...) asparagine glycosylation is found at asparagine 725 and asparagine 730.

This sequence belongs to the peptidase M28 family. M28B subfamily. As to quaternary structure, homodimer; disulfide-linked. Binds one transferrin molecule per subunit. Interacts with SH3BP4. Interacts with STEAP3; facilitates TFRC endocytosis in erythroid precursor cells. Post-translationally, stearoylated by ZDHHC6 which inhibits TFRC-mediated activation of the JNK pathway and promotes mitochondrial fragmentation. Stearoylation does not affect iron uptake. N- and O-glycosylated, phosphorylated and palmitoylated.

It localises to the cell membrane. The protein localises to the melanosome. In terms of biological role, cellular uptake of iron occurs via receptor-mediated endocytosis of ligand-occupied transferrin receptor into specialized endosomes. Endosomal acidification leads to iron release. The apotransferrin-receptor complex is then recycled to the cell surface with a return to neutral pH and the concomitant loss of affinity of apotransferrin for its receptor. Transferrin receptor is necessary for development of erythrocytes and the nervous system. Upon stimulation, positively regulates T and B cell proliferation through iron uptake. Acts as a lipid sensor that regulates mitochondrial fusion by regulating activation of the JNK pathway. When dietary levels of stearate (C18:0) are low, promotes activation of the JNK pathway, resulting in HUWE1-mediated ubiquitination and subsequent degradation of the mitofusin MFN2 and inhibition of mitochondrial fusion. When dietary levels of stearate (C18:0) are high, TFRC stearoylation inhibits activation of the JNK pathway and thus degradation of the mitofusin MFN2. Mediates uptake of NICOL1 into fibroblasts where it may regulate extracellular matrix production. This Mus musculus (Mouse) protein is Transferrin receptor protein 1 (Tfrc).